An 83-amino-acid polypeptide reads, in one-letter code: Mu-theraphotoxin-Hhn2p (83 aa).

The signal sequence occupies residues Met-1 to Ala-21. The propeptide occupies Ser-22 to Arg-48. 3 disulfides stabilise this stretch: Cys-50–Cys-65, Cys-57–Cys-70, and Cys-64–Cys-77. Leu-81 is modified (leucine amide).

Belongs to the neurotoxin 10 (Hwtx-1) family. 15 (Hntx-3) subfamily. Monomer. As to expression, expressed by the venom gland.

It localises to the secreted. Lethal neurotoxin. Selectively blocks tetrodotoxin-sensitive voltage-gated sodium channels (Nav). Does not affect tetrodotoxin-resistant voltage-gated sodium channels or calcium channels. The chain is Mu-theraphotoxin-Hhn2p from Cyriopagopus hainanus (Chinese bird spider).